The chain runs to 206 residues: Probable N-acetyltransferase 14 (206 aa).

Positions 55-206 (LRFVLASFAL…TLVREFSKDL (152 aa)) constitute an N-acetyltransferase domain. Residues 57-77 (FVLASFALALLLPVFLAVTAV) form a helical membrane-spanning segment.

The protein belongs to the camello family.

The protein localises to the membrane. In terms of biological role, probable acetyltransferase. May act as a transcription factor regulating the expression of coproporphyrinogen oxidase by binding to a promoter regulatory element. This Macaca fascicularis (Crab-eating macaque) protein is Probable N-acetyltransferase 14 (NAT14).